The following is a 137-amino-acid chain: Large ribosomal subunit protein eL32 (137 aa).

The tract at residues 95-137 is disordered; it reads PSAAEIATPVSSRKRIASSPARQADRCSRSRRSKFRPRRLRAS. Positions 123 to 137 are enriched in basic residues; it reads RSRRSKFRPRRLRAS.

The protein belongs to the eukaryotic ribosomal protein eL32 family.

This is Large ribosomal subunit protein eL32 (rpl32) from Trichoderma harzianum (Hypocrea lixii).